We begin with the raw amino-acid sequence, 261 residues long: Src-like-adapter 2 (261 aa).

Positions 1–10 (MGSLPSRRKS) are enriched in basic residues. The tract at residues 1–31 (MGSLPSRRKSLPSPSLSSSVQGQGPVTMEAE) is disordered. Residue glycine 2 is the site of N-myristoyl glycine attachment. The SH3 domain occupies 32–92 (RSKATAVALG…PSVHVAKVSH (61 aa)). The 98-residue stretch at 94–191 (WLYEGLSREK…DICCLLKEPC (98 aa)) folds into the SH2 domain. The SLA C-terminal stretch occupies residues 195–261 (RAGPLPGKDI…NDEAVSLDDA (67 aa)).

As to quaternary structure, interacts (via SH2 domain) with ZAP70 (phosphorylated) and CD3Z (phosphorylated). Interacts (via SH2 domain) with CSF1R (phosphorylated). Interacts (via its C-terminal domain) with CBL (phosphorylated). Phosphorylated by CSF1R. In terms of tissue distribution, predominantly expressed in immune system, with highest levels in peripheral blood leukocytes. Expressed in spleen, thymus and lymph nodes. Expressed in T-cells as well as in monocytes, and at low level in B-cells. Also detected in placenta, prostate, skin, retina and colon.

The protein localises to the cytoplasm. Its subcellular location is the cell membrane. It is found in the cytoplasmic vesicle. Adapter protein, which negatively regulates T-cell receptor (TCR) signaling. Inhibits T-cell antigen-receptor induced activation of nuclear factor of activated T-cells. May act by linking signaling proteins such as ZAP70 with CBL, leading to a CBL dependent degradation of signaling proteins. This chain is Src-like-adapter 2 (SLA2), found in Homo sapiens (Human).